Reading from the N-terminus, the 302-residue chain is Deubiquitinase OTUD6B (302 aa).

Acidic residues predominate over residues 1–10; sequence MEGSEDEEAE. Disordered regions lie at residues 1-52 and 99-121; these read MEGS…KQLA and EQQI…AALE. The segment covering 106–116 has biased composition (basic residues); it reads RISKAQKRREK. The region spanning 156-293 is the OTU domain; the sequence is LEIKQIPSDG…GEHYNSVKLL (138 aa). The interval 161–167 is cys-loop; it reads IPSDGHC. Aspartate 164 is an active-site residue. Cysteine 167 functions as the Nucleophile in the catalytic mechanism. Positions 228 to 238 are variable-loop; it reads IANTAAWGGQL. The tract at residues 276-286 is his-loop; the sequence is YMRHAYGLGEH. The active site involves histidine 286.

The enzyme catalyses Thiol-dependent hydrolysis of ester, thioester, amide, peptide and isopeptide bonds formed by the C-terminal Gly of ubiquitin (a 76-residue protein attached to proteins as an intracellular targeting signal).. Its function is as follows. Deubiquitinating enzyme that may play a role in the ubiquitin-dependent regulation of different cellular processes. In Gallus gallus (Chicken), this protein is Deubiquitinase OTUD6B (OTUD6B).